The following is an 807-amino-acid chain: MVEQLTQHDPRRIGPFEVLGRLGAGGMGLVYLARSASGRRVAIKTVRTELAEDQLFRVRFTREVEAARAVSGFYTAAVVDADPRAAVPWLATAYVPAPSLEEIVNECGPMPTQAVRWLAAGIAQALQSIHGAGLVHRDLKPSNVLVVEDGPRVIDFGIASGVSNTRLTMTNVAVGTPAYMSPEQARDSRSVTGASDIFSLGSTLVFAATGHAPFHGANPVETVFMLVREGPDLEGLPDDLRPLIESCMQMDATHPAAEPRDLQAQLAPHLFASGSDDSGTASAWLPVPATAMIERRRGGRRTARRPPRPRPRRLRAAPQGPGAGHRLAQRGRPAFALPAVLALAAVRRVRTAAGPSAAPDGGPVQLPGAKVPIGPGRRAGEGRGAAAAAPRRRDRLGPAARRSERFLGGHGPHRTVPASTLRPGTPSPAPDRWRPWRFRMSNDVWGTPVVSGDLLYVTSFEVHALDVGNGRRQFKTRDVAWAMAVEGGRIHASDGPSLYALDAASGAEQWRLATDAWVYALKADRGTVLTATRGGGVQGWEASNGEKLWEVTGAQSDFETAEAGPVIHDGTVYLWQDARLRALDARTGLERWSYPIGDAASCGGVPVRVTPATDGYVYVAAGTRVLAVETGSGPVRWHFEAPAVFLSPPAFAPGPAVTGGGVYLADYLGTVYALDATTGKDRWRIATEARSSIEPVLVAVGNVHVGSGSALYTLDAVTDTPKWRFAAGGDVVGAPWWRRPGPLRLGGPRALHPGRGGRPAALKLATGGEITGSPVAQAGVVYACSKDRCVYALDALKGTGTGNRART.

Positions 16–272 constitute a Protein kinase domain; the sequence is FEVLGRLGAG…QAQLAPHLFA (257 aa). ATP-binding positions include 22–30 and Lys-44; that span reads LGAGGMGLV. Ser-71 carries the phosphoserine; by autocatalysis modification. The Proton acceptor role is filled by Asp-138. Thr-168 carries the phosphothreonine; by autocatalysis modification. Disordered stretches follow at residues 292-328 and 353-429; these read MIER…HRLA and AGPS…PSPA. A compositionally biased stretch (basic residues) spans 297–315; that stretch reads RGGRRTARRPPRPRPRRLR. Residues 353 to 363 are compositionally biased toward low complexity; the sequence is AGPSAAPDGGP.

It belongs to the protein kinase superfamily. Ser/Thr protein kinase family. In terms of assembly, interacts (via the N-terminal kinase domain) with KbpA; the interaction prevents autophosphorylation of AfsK. Post-translationally, autophosphorylated mainly on threonine residues. Some phosphorylation on serine residues. Autophosphorylation on Thr-168 is the major site enhancing kinase activity towards AfsR, and is regulated though interaction with KbpA.

The enzyme catalyses L-seryl-[protein] + ATP = O-phospho-L-seryl-[protein] + ADP + H(+). The catalysed reaction is L-threonyl-[protein] + ATP = O-phospho-L-threonyl-[protein] + ADP + H(+). Functionally, component of the AfsK/AfsR system involved in the response of aerial mycelium formation to glucose. This Streptomyces griseus protein is Serine/threonine-protein kinase AfsK (afsK).